The chain runs to 346 residues: Phosphoribosylformylglycinamidine cyclo-ligase (346 aa).

Belongs to the AIR synthase family.

Its subcellular location is the cytoplasm. The enzyme catalyses 2-formamido-N(1)-(5-O-phospho-beta-D-ribosyl)acetamidine + ATP = 5-amino-1-(5-phospho-beta-D-ribosyl)imidazole + ADP + phosphate + H(+). The protein operates within purine metabolism; IMP biosynthesis via de novo pathway; 5-amino-1-(5-phospho-D-ribosyl)imidazole from N(2)-formyl-N(1)-(5-phospho-D-ribosyl)glycinamide: step 2/2. The polypeptide is Phosphoribosylformylglycinamidine cyclo-ligase (Vibrio campbellii (strain ATCC BAA-1116)).